The following is a 647-amino-acid chain: Transcriptional repressor XBP1 (647 aa).

2 stretches are compositionally biased toward polar residues: residues 138–148 (SNKTPVSASPT) and 156–170 (STAS…LTKN). 2 disordered regions span residues 138–170 (SNKT…LTKN) and 264–295 (LLSS…STSS). Low complexity predominate over residues 264 to 282 (LLSSSTSSPPKRRTSTGST). Residues 282-395 (TFLDANASSS…PDFPKDCESW (114 aa)) form the HTH APSES-type domain. The H-T-H motif DNA-binding region spans 318-339 (CQSYKDFLINELGPDQIDLPNL). The segment covering 425 to 434 (TNFTSTAVAR) has biased composition (low complexity). Disordered stretches follow at residues 425–455 (TNFT…HSKA), 485–508 (KKNS…GPRD), and 612–647 (QNQR…NSKQ). Residues 435–445 (PRQKPRPRPRQ) show a composition bias toward basic residues. A compositionally biased stretch (low complexity) spans 493–502 (SSTYTSQTSS).

It is found in the nucleus. Transcriptional repressor which binds to the consensus sequence 5'-GCCTCGA[G/A]G[C/A]-3'. Represses CLN1 transcription. The protein is Transcriptional repressor XBP1 (XBP1) of Saccharomyces cerevisiae (strain ATCC 204508 / S288c) (Baker's yeast).